The following is a 561-amino-acid chain: Serine palmitoyltransferase 2 (561 aa).

The chain crosses the membrane as a helical span at residues 57 to 77 (PYYISLLTYLNYLILIILGHV). Lys-366 carries the N6-(pyridoxal phosphate)lysine modification. A helical membrane pass occupies residues 443 to 463 (LGFIVYGVADSPVIPLLLYCP).

It belongs to the class-II pyridoxal-phosphate-dependent aminotransferase family. As to quaternary structure, LCB1 and LCB2 encode essential subunits of the enzyme and form a heterodimer. Component of the SPOTS complex, at least composed of LCB1/2 (LCB1 and/or LCB2), ORM1/2 (ORM1 and/or ORM2), SAC1 and TSC3. Interacts with LCB1 and TSC3. It depends on pyridoxal 5'-phosphate as a cofactor.

Its subcellular location is the cytoplasm. It is found in the endoplasmic reticulum. It localises to the membrane. It catalyses the reaction L-serine + hexadecanoyl-CoA + H(+) = 3-oxosphinganine + CO2 + CoA. Its pathway is lipid metabolism; sphingolipid metabolism. Catalytic subunit of serine palmitoyltransferase (SPT), which catalyzes the committed step in the synthesis of sphingolipids, the condensation of serine with palmitoyl CoA to form the long chain base 3-ketosphinganine. The polypeptide is Serine palmitoyltransferase 2 (LCB2) (Saccharomyces cerevisiae (strain ATCC 204508 / S288c) (Baker's yeast)).